The primary structure comprises 102 residues: Small ribosomal subunit protein uS10 (102 aa).

The protein belongs to the universal ribosomal protein uS10 family. Part of the 30S ribosomal subunit.

Involved in the binding of tRNA to the ribosomes. The chain is Small ribosomal subunit protein uS10 from Leptospira borgpetersenii serovar Hardjo-bovis (strain JB197).